Reading from the N-terminus, the 221-residue chain is GTP cyclohydrolase III (221 aa).

The protein belongs to the archaeal-type GTP cyclohydrolase family.

The enzyme catalyses GTP + 3 H2O = 2-amino-5-formylamino-6-(5-phospho-D-ribosylamino)pyrimidin-4(3H)-one + 2 phosphate + 2 H(+). Catalyzes the formation of 2-amino-5-formylamino-6-ribofuranosylamino-4(3H)-pyrimidinone ribonucleotide monophosphate and inorganic phosphate from GTP. Also has an independent pyrophosphate phosphohydrolase activity. In Pyrobaculum aerophilum (strain ATCC 51768 / DSM 7523 / JCM 9630 / CIP 104966 / NBRC 100827 / IM2), this protein is GTP cyclohydrolase III.